The following is a 358-amino-acid chain: Putative movement protein (358 aa).

Transports viral genome to neighboring plant cells directly through plasmosdesmata, without any budding. The movement protein allows efficient cell to cell propagation, by bypassing the host cell wall barrier (Potential). The sequence is that of Putative movement protein from Raspberry bushy dwarf virus (isolate Malling Jewel raspberry/R15) (RBDV).